Consider the following 192-residue polypeptide: Large ribosomal subunit protein uL10 (192 aa).

This sequence belongs to the universal ribosomal protein uL10 family. Part of the ribosomal stalk of the 50S ribosomal subunit. The N-terminus interacts with L11 and the large rRNA to form the base of the stalk. The C-terminus forms an elongated spine to which L12 dimers bind in a sequential fashion forming a multimeric L10(L12)X complex.

Forms part of the ribosomal stalk, playing a central role in the interaction of the ribosome with GTP-bound translation factors. This chain is Large ribosomal subunit protein uL10, found in Gloeobacter violaceus (strain ATCC 29082 / PCC 7421).